The chain runs to 378 residues: Plant intracellular Ras-group-related LRR protein 8 (378 aa).

Residues 10-86 (PTITVQVKFG…VMLMASQGLH (77 aa)) enclose the Ubiquitin-like domain. The interval 85–120 (LHQGDGPITKNSSVPAPSTRRASNVKEAQIQKSDTN) is disordered. A compositionally biased stretch (polar residues) spans 93–106 (TKNSSVPAPSTRRA). LRR repeat units follow at residues 129 to 152 (WKATGIIALSDSSLKAVPEEVWGC), 153 to 176 (GSSIRVLDVSNNCIEAIPQEIAAL), 178 to 201 (SLQKLILTANDIADGNISWEGLTC), 202 to 225 (VQTLTVLSLSQNRLVTLPSSLGSI), 226 to 250 (THLRELRIANNRLENLPVEIGLLKH), 252 to 271 (EILIANNNRITSLPSSIGGC), 272 to 293 (ESLNEVDLSSNLLAELPEAFGN), 294 to 317 (LQHLKALSVRNNGLTSLPSAFFIK), and 319 to 344 (SQLITLDLHGTEITNDVLRQVDGWEE).

The protein belongs to the SHOC2 family. In terms of tissue distribution, widely expressed except in panicles.

Leucine-rich repeat protein that likely mediates protein interactions, possibly in the context of signal transduction. This is Plant intracellular Ras-group-related LRR protein 8 (IRL8) from Oryza sativa subsp. japonica (Rice).